The primary structure comprises 932 residues: Protocadherin gamma-A7 (932 aa).

The signal sequence occupies residues 1 to 28; it reads MAAQPRGGDYRGFFLLSILLGTPWEAWA. Cadherin domains follow at residues 29–133, 134–242, 243–347, 348–452, 453–562, and 570–682; these read GRIL…VPRF, LTEE…TPVF, SLPQ…APEV, TMTS…PPTF, PHSS…PPEI, and DGST…EPSD. Over 29–692 the chain is Extracellular; it reads GRILYSVSEE…GPYNYDLTLY (664 aa). Asparagine 419 and asparagine 545 each carry an N-linked (GlcNAc...) asparagine glycan. The helical transmembrane segment at 693–713 threads the bilayer; sequence LVVAVATVSCVFLAFVLVLLA. At 714–932 the chain is on the cytoplasmic side; it reads LRLRRWHKSR…KKKSGKKEKK (219 aa). 2 disordered regions span residues 805 to 841 and 902 to 932; these read PSIQ…WPNN and ATLT…KEKK. A compositionally biased stretch (basic residues) spans 922–932; sequence NKKKSGKKEKK.

The protein localises to the cell membrane. Functionally, potential calcium-dependent cell-adhesion protein. May be involved in the establishment and maintenance of specific neuronal connections in the brain. This is Protocadherin gamma-A7 (PCDHGA7) from Homo sapiens (Human).